A 445-amino-acid polypeptide reads, in one-letter code: DNA polymerase IV (445 aa).

In terms of domain architecture, UmuC spans L49–G229. Positions 53 and 146 each coordinate Mg(2+). The active site involves E147.

This sequence belongs to the DNA polymerase type-Y family. As to quaternary structure, monomer. It depends on Mg(2+) as a cofactor.

It is found in the cytoplasm. It carries out the reaction DNA(n) + a 2'-deoxyribonucleoside 5'-triphosphate = DNA(n+1) + diphosphate. In terms of biological role, poorly processive, error-prone DNA polymerase involved in untargeted mutagenesis. Copies undamaged DNA at stalled replication forks, which arise in vivo from mismatched or misaligned primer ends. These misaligned primers can be extended by PolIV. Exhibits no 3'-5' exonuclease (proofreading) activity. May be involved in translesional synthesis, in conjunction with the beta clamp from PolIII. The polypeptide is DNA polymerase IV (Brucella melitensis biotype 1 (strain ATCC 23456 / CCUG 17765 / NCTC 10094 / 16M)).